A 147-amino-acid polypeptide reads, in one-letter code: Shadow of prion protein (147 aa).

Positions 1 to 24 (MNWTTATCWALLLATAFLCDSCSA) are cleaved as a signal peptide. Gly residues predominate over residues 26–43 (GGRGGARGSARGVRGGAR). Residues 26 to 46 (GGRGGARGSARGVRGGARGAS) form a disordered region. N-linked (GlcNAc...) asparagine glycosylation occurs at asparagine 107. Glycine 122 carries the GPI-anchor amidated glycine lipid modification. Positions 123–147 (SGSVHSPRICLLLSGTLGALELLRP) are cleaved as a propeptide — removed in mature form.

The protein belongs to the SPRN family. N-glycosylated. In terms of tissue distribution, almost exclusively expressed in brain, with weak expression in lung and stomach.

It is found in the cell membrane. Functionally, prion-like protein that has PrP(C)-like neuroprotective activity. May act as a modulator for the biological actions of normal and abnormal PrP. This chain is Shadow of prion protein (Sprn), found in Rattus norvegicus (Rat).